Consider the following 183-residue polypeptide: Peptidyl-tRNA hydrolase (183 aa).

Tyr14 contacts tRNA. His19 acts as the Proton acceptor in catalysis. TRNA contacts are provided by Tyr61, Asn63, and Asn109.

The protein belongs to the PTH family. Monomer.

It localises to the cytoplasm. The enzyme catalyses an N-acyl-L-alpha-aminoacyl-tRNA + H2O = an N-acyl-L-amino acid + a tRNA + H(+). Hydrolyzes ribosome-free peptidyl-tRNAs (with 1 or more amino acids incorporated), which drop off the ribosome during protein synthesis, or as a result of ribosome stalling. Functionally, catalyzes the release of premature peptidyl moieties from peptidyl-tRNA molecules trapped in stalled 50S ribosomal subunits, and thus maintains levels of free tRNAs and 50S ribosomes. The protein is Peptidyl-tRNA hydrolase of Aliarcobacter butzleri (strain RM4018) (Arcobacter butzleri).